The chain runs to 157 residues: Small ribosomal subunit protein uS7 (157 aa).

It belongs to the universal ribosomal protein uS7 family. In terms of assembly, part of the 30S ribosomal subunit. Contacts proteins S9 and S11.

One of the primary rRNA binding proteins, it binds directly to 16S rRNA where it nucleates assembly of the head domain of the 30S subunit. Is located at the subunit interface close to the decoding center, probably blocks exit of the E-site tRNA. The sequence is that of Small ribosomal subunit protein uS7 from Chlamydia felis (strain Fe/C-56) (Chlamydophila felis).